Consider the following 585-residue polypeptide: Amyloid protein-binding protein 2 (585 aa).

8 TPR repeats span residues 50–83, 120–153, 206–239, 288–321, 333–367, 429–462, 471–505, and 514–547; these read QGRL…HHCF, IQVG…CTLH, AALY…ITAG, SDTL…RQSV, HEDL…ITHI, AKHY…KEQL, ALSV…GKKL, and EYDY…NRLR.

Component of a CRL2 E3 ubiquitin-protein ligase complex, also named ECS (Elongin BC-CUL2/5-SOCS-box protein) complex, composed of CUL2, Elongin BC (ELOB and ELOC), RBX1 and substrate-specific adapter APPBP2. Interacts with APP; APP interaction inhibits the E3 ubiquitin-protein ligase activity of the CRL2(APPBP2) complex. In terms of processing, rapidly degraded by the proteasome upon overexpression of a C-terminal fragment of APP.

The protein resides in the nucleus. It is found in the cytoplasm. It localises to the cytoskeleton. Its subcellular location is the membrane. It participates in protein modification; protein ubiquitination. Its activity is regulated as follows. E3 ubiquitin-protein ligase activity of the CRL2(APPBP2) complex is inhibited by APP. In terms of biological role, substrate-recognition component of a Cul2-RING (CRL2) E3 ubiquitin-protein ligase complex of the DesCEND (destruction via C-end degrons) pathway, which recognizes a C-degron located at the extreme C terminus of target proteins, leading to their ubiquitination and degradation. The C-degron recognized by the DesCEND pathway is usually a motif of less than ten residues and can be present in full-length proteins, truncated proteins or proteolytically cleaved forms. The CRL2(APPBP2) complex specifically recognizes proteins with a -Arg-Xaa-Xaa-Gly degron at the C-terminus, leading to their ubiquitination and degradation. The CRL2(APPBP2) complex mediates ubiquitination and degradation of truncated SELENOV selenoproteins produced by failed UGA/Sec decoding, which end with a -Arg-Xaa-Xaa-Gly degron. May play a role in intracellular protein transport: may be involved in the translocation of APP along microtubules toward the cell surface. This Homo sapiens (Human) protein is Amyloid protein-binding protein 2.